A 448-amino-acid polypeptide reads, in one-letter code: Multiple inositol polyphosphate phosphatase 1 (448 aa).

The first 19 residues, 1–19, serve as a signal peptide directing secretion; sequence MAPRRAACLLPLLVAVASA. Histidine 69 is an active-site residue. Residues asparagine 203, asparagine 257, asparagine 409, and asparagine 441 are each glycosylated (N-linked (GlcNAc...) asparagine). The Prevents secretion from ER motif lies at 445-448; sequence ADEL.

This sequence belongs to the histidine acid phosphatase family. MINPP1 subfamily. N-glycosylated. In terms of tissue distribution, present in growth plate chondrocytes but not detectable in articular chondrocytes (at protein level). Spatially restricted to chondrocytes in the lower portion of the proliferative zone and the upper portion of the hypertrophic zone in the growth plate of long bones (at protein level). Weakly expressed in kidney, liver, lung, skin and spleen, and not detected in brain, heart and muscle.

The protein localises to the endoplasmic reticulum lumen. It is found in the secreted. It localises to the cell membrane. The catalysed reaction is 1D-myo-inositol hexakisphosphate + H2O = 1D-myo-inositol 1,2,4,5,6-pentakisphosphate + phosphate. The enzyme catalyses 1D-myo-inositol 1,2,4,5,6-pentakisphosphate + H2O = 1D-myo-inositol 1,2,5,6-tetrakisphosphate + phosphate. It carries out the reaction 1D-myo-inositol 1,2,5,6-tetrakisphosphate + H2O = 1D-myo-inositol 1,2,6-trisphosphate + phosphate. It catalyses the reaction 1D-myo-inositol 1,2,6-trisphosphate + H2O = 1D-myo-inositol 1,2-bisphosphate + phosphate. The catalysed reaction is 1D-myo-inositol 1,2-bisphosphate + H2O = 1D-myo-inositol 2-phosphate + phosphate. The enzyme catalyses 1D-myo-inositol hexakisphosphate + H2O = 1D-myo-inositol 1,2,3,5,6-pentakisphosphate + phosphate. It carries out the reaction 1D-myo-inositol 1,2,3,5,6-pentakisphosphate + H2O = 1D-myo-inositol 1,2,3,6-tetrakisphosphate + phosphate. It catalyses the reaction 1D-myo-inositol 1,2,3,6-tetrakisphosphate + H2O = 1D-myo-inositol 1,2,3-trisphosphate + phosphate. The catalysed reaction is 1D-myo-inositol 1,2,3-trisphosphate + H2O = 1D-myo-inositol 2,3-bisphosphate + phosphate. The enzyme catalyses 1D-myo-inositol 2,3-bisphosphate + H2O = 1D-myo-inositol 2-phosphate + phosphate. It carries out the reaction 1D-myo-inositol 1,3,4,5,6-pentakisphosphate + H2O = 1D-myo-inositol 1,4,5,6-tetrakisphosphate + phosphate. It catalyses the reaction 1D-myo-inositol 1,4,5,6-tetrakisphosphate + H2O = 1D-myo-inositol 1,4,5-trisphosphate + phosphate. The catalysed reaction is (2R)-2,3-bisphosphoglycerate + H2O = (2R)-2-phosphoglycerate + phosphate. Multiple inositol polyphosphate phosphatase that hydrolyzes 1D-myo-inositol 1,3,4,5,6-pentakisphosphate (InsP5[2OH]) and 1D-myo-inositol hexakisphosphate (InsP6) to a range of less phosphorylated inositol phosphates. This regulates the availability of these various small molecule second messengers and metal chelators which control many aspects of cell physiology. Has a weak in vitro activity towards 1D-myo-inositol 1,4,5-trisphosphate which is unlikely to be physiologically relevant. By regulating intracellular inositol polyphosphates pools, which act as metal chelators, it may control the availability of intracellular calcium and iron, which are important for proper neuronal development and homeostasis. May have a dual substrate specificity, and function as a 2,3-bisphosphoglycerate 3-phosphatase hydrolyzing 2,3-bisphosphoglycerate to 2-phosphoglycerate. 2,3-bisphosphoglycerate (BPG) is formed as part of the Rapoport-Luebering glycolytic bypass and is a regulator of systemic oxygen homeostasis as the major allosteric effector of hemoglobin. This Gallus gallus (Chicken) protein is Multiple inositol polyphosphate phosphatase 1 (MINPP1).